The primary structure comprises 309 residues: Homoserine kinase (309 aa).

Residue 91–101 participates in ATP binding; that stretch reads PIGSGLGSSAC.

Belongs to the GHMP kinase family. Homoserine kinase subfamily.

Its subcellular location is the cytoplasm. The enzyme catalyses L-homoserine + ATP = O-phospho-L-homoserine + ADP + H(+). It functions in the pathway amino-acid biosynthesis; L-threonine biosynthesis; L-threonine from L-aspartate: step 4/5. Functionally, catalyzes the ATP-dependent phosphorylation of L-homoserine to L-homoserine phosphate. This is Homoserine kinase from Buchnera aphidicola subsp. Acyrthosiphon pisum (strain APS) (Acyrthosiphon pisum symbiotic bacterium).